Here is a 228-residue protein sequence, read N- to C-terminus: Urease accessory protein UreF (228 aa).

It belongs to the UreF family. UreD, UreF and UreG form a complex that acts as a GTP-hydrolysis-dependent molecular chaperone, activating the urease apoprotein by helping to assemble the nickel containing metallocenter of UreC. The UreE protein probably delivers the nickel.

The protein localises to the cytoplasm. Functionally, required for maturation of urease via the functional incorporation of the urease nickel metallocenter. This is Urease accessory protein UreF from Lachnoclostridium phytofermentans (strain ATCC 700394 / DSM 18823 / ISDg) (Clostridium phytofermentans).